We begin with the raw amino-acid sequence, 270 residues long: Phosphatidylglycerol--prolipoprotein diacylglyceryl transferase (270 aa).

A run of 4 helical transmembrane segments spans residues 19 to 39 (FPVY…LWLA), 56 to 76 (LVLI…VIFE), 92 to 112 (QGGL…VLFA), and 116 to 136 (GVSF…GQAI). Residue arginine 138 coordinates a 1,2-diacyl-sn-glycero-3-phospho-(1'-sn-glycerol). 3 helical membrane-spanning segments follow: residues 178–198 (HPTF…LLAL), 206–226 (GELF…VEGL), and 236–256 (LRIA…FIIV).

The protein belongs to the Lgt family.

Its subcellular location is the cell membrane. The enzyme catalyses L-cysteinyl-[prolipoprotein] + a 1,2-diacyl-sn-glycero-3-phospho-(1'-sn-glycerol) = an S-1,2-diacyl-sn-glyceryl-L-cysteinyl-[prolipoprotein] + sn-glycerol 1-phosphate + H(+). It functions in the pathway protein modification; lipoprotein biosynthesis (diacylglyceryl transfer). Catalyzes the transfer of the diacylglyceryl group from phosphatidylglycerol to the sulfhydryl group of the N-terminal cysteine of a prolipoprotein, the first step in the formation of mature lipoproteins. In Bacillus cereus (strain B4264), this protein is Phosphatidylglycerol--prolipoprotein diacylglyceryl transferase.